Consider the following 852-residue polypeptide: Beta-galactosidase 8 (852 aa).

The first 29 residues, 1 to 29 (MEIAAKMVKVRKMEMILLLILVIVVAATA), serve as a signal peptide directing secretion. N-linked (GlcNAc...) asparagine glycosylation occurs at N31. E188 acts as the Proton donor in catalysis. The active-site Nucleophile is E257. N-linked (GlcNAc...) asparagine glycans are attached at residues N258, N475, N766, and N807. The region spanning 766-852 (NRTRPVLSLK…KSLAVEASCS (87 aa)) is the SUEL-type lectin domain.

Belongs to the glycosyl hydrolase 35 family. In terms of tissue distribution, expressed in roots, flowers and siliques.

The protein localises to the secreted. It is found in the extracellular space. Its subcellular location is the apoplast. It catalyses the reaction Hydrolysis of terminal non-reducing beta-D-galactose residues in beta-D-galactosides.. The protein is Beta-galactosidase 8 (BGAL8) of Arabidopsis thaliana (Mouse-ear cress).